We begin with the raw amino-acid sequence, 314 residues long: Methenyltetrahydromethanopterin cyclohydrolase (314 aa).

Belongs to the MCH family.

The protein resides in the cytoplasm. It carries out the reaction 5,10-methenyl-5,6,7,8-tetrahydromethanopterin + H2O = N(5)-formyl-5,6,7,8-tetrahydromethanopterin + H(+). Its pathway is one-carbon metabolism; methanogenesis from CO(2); 5,10-methenyl-5,6,7,8-tetrahydromethanopterin from CO(2): step 3/3. Functionally, catalyzes the reversible interconversion of 5-formyl-H(4)MPT to methenyl-H(4)MPT(+). The sequence is that of Methenyltetrahydromethanopterin cyclohydrolase from Methanocorpusculum labreanum (strain ATCC 43576 / DSM 4855 / Z).